Consider the following 779-residue polypeptide: Acyl-homoserine lactone acylase PvdQ (779 aa).

Residues M1–A25 form the signal peptide. Residues S202–G223 constitute a propeptide, spacer peptide. S224 acts as the Nucleophile in catalysis. Over residues E731 to A746 the composition is skewed to polar residues. Residues E731–W752 are disordered.

It belongs to the peptidase S45 family. In terms of assembly, heterodimer of an alpha subunit and a beta subunit processed from the same precursor.

It is found in the periplasm. It catalyses the reaction an N-acyl-L-homoserine lactone + H2O = L-homoserine lactone + a carboxylate. Functionally, catalyzes the deacylation of acyl-homoserine lactone (AHL or acyl-HSL), releasing homoserine lactone (HSL) and the corresponding fatty acid. Possesses a specificity for the degradation of long-chain acyl-HSLs (side chains of 11 to 14 carbons in length). This Pseudomonas savastanoi pv. phaseolicola (strain 1448A / Race 6) (Pseudomonas syringae pv. phaseolicola (strain 1448A / Race 6)) protein is Acyl-homoserine lactone acylase PvdQ (pvdQ).